The primary structure comprises 286 residues: AB hydrolase superfamily protein YfhM (286 aa).

Residues 27-272 (PLIVLLHGFP…ASHWINHEKP (246 aa)) enclose the AB hydrolase-1 domain. D103 serves as the catalytic Nucleophile. Y210 (proton donor) is an active-site residue. H265 (proton acceptor) is an active-site residue.

Belongs to the AB hydrolase superfamily. Epoxide hydrolase family.

This Bacillus subtilis (strain 168) protein is AB hydrolase superfamily protein YfhM (yfhM).